We begin with the raw amino-acid sequence, 326 residues long: UDP-N-acetylglucosamine transporter (326 aa).

The next 8 helical transmembrane spans lie at 4–24, 38–58, 136–156, 174–194, 212–232, 244–264, 269–289, and 293–313; these read NLKY…VLTM, LSST…ILLV, LGVY…FVQW, FVGL…GVYF, LGFF…GELV, LTWI…AVIK, ILKG…SYFW, and FVPT…TFLY.

The protein belongs to the nucleotide-sugar transporter family. SLC35A subfamily. In terms of assembly, interacts with SLC35A2; the interaction is reduced in the presence of SLC35A4. Found in a complex with SLC35A2 and SLC35A4. Interacts with MGAT4B. Post-translationally, O-Glcnacylation regulates the stability of SLC35A3 and the specific complex formation with MGAT4B.

Its subcellular location is the golgi apparatus membrane. It catalyses the reaction UMP(out) + UDP-N-acetyl-alpha-D-glucosamine(in) = UMP(in) + UDP-N-acetyl-alpha-D-glucosamine(out). In terms of biological role, transports diphosphate-N-acetylglucosamine (UDP-GlcNAc) from the cytosol into the lumen of the Golgi apparatus, functioning as an antiporter that exchanges UDP-N-acetyl-alpha-D-glucosamine for UMP. May supply UDP-GlcNAc as substrate for Golgi-resident glycosyltransferases that generate highly branched, multiantennary complex N-glycans and keratan sulfate. However, the exact role of SLC35A3 still needs to be elucidated, it could be a member of a catalytically more efficient multiprotein complex rather than function independently as a single transporter. In Bos taurus (Bovine), this protein is UDP-N-acetylglucosamine transporter (SLC35A3).